The chain runs to 121 residues: MEPNQQRSCGSSSDSSATGTPQGSNVAVWRPWHDAPRTHVQNPPTAQQQFYSDNQSHMNDKGKPPSFQHPVKLFWPKSRCYDFMYQEAEELLRHFPVQATISLYQETDSDSDSEEEDIYEN.

Residues 1–69 (MEPNQQRSCG…DKGKPPSFQH (69 aa)) are disordered. Positions 29 to 32 (WRPW) match the WRPW motif motif. The span at 39 to 57 (HVQNPPTAQQQFYSDNQSH) shows a compositional bias: polar residues. The tract at residues 69–104 (HPVKLFWPKSRCYDFMYQEAEELLRHFPVQATISLY) is ripply homology domain.

This sequence belongs to the ripply family. In terms of tissue distribution, expressed in the presomitic mesoderm (PSM) in the anterior halves of somitomeres S-0, S-I and S-II and in the newly formed somites.

The protein resides in the nucleus. Its function is as follows. Required during somitogenesis to regulate somite differentiation and the positioning of the presomitic mesoderm-front. Represses the expression of genes involved in somite segmentation by acting with the corepressor tle4 to down-regulate the transcriptional activity of tbx6. Also regulates retinoic acid signaling during somitogenesis and is necessary for the expression of aldh1a2/raldh2. The sequence is that of Protein ripply2.1 (ripply2.1) from Xenopus laevis (African clawed frog).